The chain runs to 132 residues: Small ribosomal subunit protein uS8 (132 aa).

It belongs to the universal ribosomal protein uS8 family. Part of the 30S ribosomal subunit. Contacts proteins S5 and S12.

Functionally, one of the primary rRNA binding proteins, it binds directly to 16S rRNA central domain where it helps coordinate assembly of the platform of the 30S subunit. The chain is Small ribosomal subunit protein uS8 from Geotalea daltonii (strain DSM 22248 / JCM 15807 / FRC-32) (Geobacter daltonii).